A 37-amino-acid chain; its full sequence is Large ribosomal subunit protein bL36c (37 aa).

This sequence belongs to the bacterial ribosomal protein bL36 family.

It localises to the plastid. The protein localises to the chloroplast. In Adiantum capillus-veneris (Maidenhair fern), this protein is Large ribosomal subunit protein bL36c.